A 573-amino-acid polypeptide reads, in one-letter code: Delta 8-(E)-sphingolipid desaturase (573 aa).

A Cytochrome b5 heme-binding domain is found at 2–77 (SRVLSRRDIA…FKIWKIGRID (76 aa)). Residues H37 and H60 each coordinate heme. The chain crosses the membrane as a helical span at residues 228-248 (LFGISFYLLSLKWFAISAICL). The short motif at 260 to 264 (HDAGH) is the Histidine box-1 element. Residues 273-293 (VDNIIGMTVASWIGGLSLGWW) form a helical membrane-spanning segment. The Histidine box-2 motif lies at 297–301 (HNVHH). Transmembrane regions (helical) follow at residues 353-372 (YLYYPILCFGRFNLYRLSWM), 393-413 (LAGLSFFNYWFFYLIIYKQMP), and 422-442 (VMISHIATMIVHVQITLSHFA). The Histidine box-3 signature appears at 481 to 485 (QVIHH).

This sequence belongs to the fatty acid desaturase type 1 family.

The protein resides in the membrane. It carries out the reaction an N-acylsphing-4-enine + 2 Fe(II)-[cytochrome b5] + O2 + 2 H(+) = a (4E,8E)-4-sphinga-4,8-dienine ceramide + 2 Fe(III)-[cytochrome b5] + 2 H2O. It functions in the pathway lipid metabolism; sphingolipid metabolism. In terms of biological role, delta(8)-fatty-acid desaturase which introduces a double bond at the 8-position in the long-chain base (LCB) of ceramides. Required for the formation of the di-unsaturated sphingoid base (E,E)-sphinga-4,8-dienine during glucosylceramide (GluCer) biosynthesis. The chain is Delta 8-(E)-sphingolipid desaturase from Kluyveromyces lactis (strain ATCC 8585 / CBS 2359 / DSM 70799 / NBRC 1267 / NRRL Y-1140 / WM37) (Yeast).